Here is a 56-residue protein sequence, read N- to C-terminus: Large ribosomal subunit protein eL37 (56 aa).

Zn(2+) is bound by residues cysteine 19, cysteine 22, cysteine 34, and cysteine 37. A C4-type zinc finger spans residues 19-37; it reads CRRCGSVSLNVHTKQCTSC.

Belongs to the eukaryotic ribosomal protein eL37 family. Zn(2+) is required as a cofactor.

Its function is as follows. Binds to the 23S rRNA. The polypeptide is Large ribosomal subunit protein eL37 (Methanosarcina mazei (strain ATCC BAA-159 / DSM 3647 / Goe1 / Go1 / JCM 11833 / OCM 88) (Methanosarcina frisia)).